The sequence spans 379 residues: MSATLALTEQLIARASVTPDDQHCQQIMTERLAALGFECETIASHGVTNLWAVKRGTDGRDGKLLAFAGHTDVVPTGPLEQWTSPPFIPAHRDGKLYGRGAADMKTSLAAFVVASEEFVAVHPDHRGTIAFLITSDEEGPATDGTVKVVELLQARGERLDYCIVGEPTSTAELGDVVKNGRRGSMSGELVVKGVQGHIAYPHLAKNPIHLLAPALAELAAEQWDAGNEYFPPTTWQVSNLHAGTGATNVTPGHADLLFNFRFSTASTVEGLQARVHAILDKHGLEYTLKWSVSGLPFLTPRGELSGALEHAIRTETGITTELSTTGGTSDGRFIARICPQVIEFGPPNGSIHKIDEHIEVRFVDPLKNVYRRVLEQLIA.

Histidine 70 lines the Zn(2+) pocket. Aspartate 72 is an active-site residue. Residue aspartate 103 coordinates Zn(2+). Glutamate 137 (proton acceptor) is an active-site residue. 3 residues coordinate Zn(2+): glutamate 138, glutamate 166, and histidine 352.

It belongs to the peptidase M20A family. DapE subfamily. As to quaternary structure, homodimer. Zn(2+) is required as a cofactor. Co(2+) serves as cofactor.

The catalysed reaction is N-succinyl-(2S,6S)-2,6-diaminopimelate + H2O = (2S,6S)-2,6-diaminopimelate + succinate. It participates in amino-acid biosynthesis; L-lysine biosynthesis via DAP pathway; LL-2,6-diaminopimelate from (S)-tetrahydrodipicolinate (succinylase route): step 3/3. In terms of biological role, catalyzes the hydrolysis of N-succinyl-L,L-diaminopimelic acid (SDAP), forming succinate and LL-2,6-diaminopimelate (DAP), an intermediate involved in the bacterial biosynthesis of lysine and meso-diaminopimelic acid, an essential component of bacterial cell walls. This chain is Succinyl-diaminopimelate desuccinylase, found in Burkholderia orbicola (strain MC0-3).